The chain runs to 443 residues: Threonine/serine transporter TdcC (443 aa).

A run of 11 helical transmembrane segments spans residues 22–42 (TTWT…FFPI), 44–64 (AGFG…PIAF), 97–117 (GVVI…IYGV), 140–160 (FVAL…KDLM), 163–183 (VMSY…LSLI), 207–227 (ILVT…FSPI), 259–279 (ASML…FTLS), 319–339 (ASII…LGTL), 366–386 (ISMI…PNIL), 389–409 (IEAM…MYAI), and 423–443 (DNVF…YKLF).

Belongs to the amino acid/polyamine transporter 2 family. SdaC/TdcC subfamily.

Its subcellular location is the cell inner membrane. The enzyme catalyses L-threonine(in) + H(+)(in) = L-threonine(out) + H(+)(out). It catalyses the reaction L-serine(in) + H(+)(in) = L-serine(out) + H(+)(out). Functionally, involved in the import of threonine and serine into the cell, with the concomitant import of a proton (symport system). The sequence is that of Threonine/serine transporter TdcC from Salmonella newport (strain SL254).